The primary structure comprises 319 residues: Thioredoxin reductase (319 aa).

36–43 (TGTNKGGQ) is a binding site for FAD. A disulfide bridge connects residues Cys136 and Cys139. FAD is bound at residue 288-297 (DVIDHVYRQA).

This sequence belongs to the class-II pyridine nucleotide-disulfide oxidoreductase family. As to quaternary structure, homodimer. The cofactor is FAD.

The protein resides in the cytoplasm. It catalyses the reaction [thioredoxin]-dithiol + NADP(+) = [thioredoxin]-disulfide + NADPH + H(+). This is Thioredoxin reductase (trxB) from Buchnera aphidicola subsp. Acyrthosiphon pisum (strain APS) (Acyrthosiphon pisum symbiotic bacterium).